The primary structure comprises 283 residues: NADPH-dependent 7-cyano-7-deazaguanine reductase (283 aa).

Residue 90-92 (IES) participates in substrate binding. 92 to 93 (SK) contributes to the NADPH binding site. Cys191 acts as the Thioimide intermediate in catalysis. The active-site Proton donor is Asp198. A substrate-binding site is contributed by 230–231 (HE). 259–260 (RG) is an NADPH binding site.

This sequence belongs to the GTP cyclohydrolase I family. QueF type 2 subfamily. As to quaternary structure, homodimer.

Its subcellular location is the cytoplasm. It catalyses the reaction 7-aminomethyl-7-carbaguanine + 2 NADP(+) = 7-cyano-7-deazaguanine + 2 NADPH + 3 H(+). Its pathway is tRNA modification; tRNA-queuosine biosynthesis. Its function is as follows. Catalyzes the NADPH-dependent reduction of 7-cyano-7-deazaguanine (preQ0) to 7-aminomethyl-7-deazaguanine (preQ1). The protein is NADPH-dependent 7-cyano-7-deazaguanine reductase of Tolumonas auensis (strain DSM 9187 / NBRC 110442 / TA 4).